The primary structure comprises 468 residues: Chromosomal replication initiator protein DnaA (468 aa).

The segment at 1–84 (MSSSLWLQCM…RFEVGSRPVA (84 aa)) is domain I, interacts with DnaA modulators. A disordered region spans residues 81–113 (RPVAAPKPAPTRTPADVAAESSAPAQLQARKPV). Residues 84 to 131 (AAPKPAPTRTPADVAAESSAPAQLQARKPVHKTWDDDAQAIADINHRS) are domain II. Residues 132 to 348 (NVNPKHKFNN…GALNRVIANA (217 aa)) form a domain III, AAA+ region region. The ATP site is built by Gly176, Gly178, Lys179, and Thr180. Positions 349 to 468 (NFTGRPITID…YSNLIRTLSS (120 aa)) are domain IV, binds dsDNA.

This sequence belongs to the DnaA family. As to quaternary structure, oligomerizes as a right-handed, spiral filament on DNA at oriC.

Its subcellular location is the cytoplasm. Its function is as follows. Plays an essential role in the initiation and regulation of chromosomal replication. ATP-DnaA binds to the origin of replication (oriC) to initiate formation of the DNA replication initiation complex once per cell cycle. Binds the DnaA box (a 9 base pair repeat at the origin) and separates the double-stranded (ds)DNA. Forms a right-handed helical filament on oriC DNA; dsDNA binds to the exterior of the filament while single-stranded (ss)DNA is stabiized in the filament's interior. The ATP-DnaA-oriC complex binds and stabilizes one strand of the AT-rich DNA unwinding element (DUE), permitting loading of DNA polymerase. After initiation quickly degrades to an ADP-DnaA complex that is not apt for DNA replication. Binds acidic phospholipids. The chain is Chromosomal replication initiator protein DnaA from Vibrio vulnificus (strain CMCP6).